The following is a 486-amino-acid chain: MSWADLNLMPALPEIVLLIAVSAILIIDLFVKGERRGVTYLLSMLALVATGAATLAAWLPYPVLTFSGMYVADPIASVAKLGLVVATGVAMIYARQYAFDRGFLKGELFTLMLFALLGMCVMVSASHMLTLYIGLELLSLALYALIALSRESVPATEAAMKYFVLGALASGLLLYGVSMVYGGTQSLHIVAVAQSIASGNANVTLVSLGLVFIVAGLAFKLGAVPFHMWVPDVYQGAPTAVTLFVGSAPKLAAFVFVIRFLAQALEPAAVAWQPMLILLAIASLVVGNLAAIMQTNIKRMLAYSTISHMGFMLIGILAATPAGYSAAMFYAITYMLMALAGFGVLLALSRAGFDCETLDDLKGLNRKNAWYALLVLLVMFSMAGIPPLVGFYAKFAVLEAAVNVGLTWLAVVGVVMSLIGAFYYLRVVKAVYFDEATGSAGDALTVGGDMKLVLGVNGLVLLGLGILPNGLYTLCLEAVRQSLGTL.

A run of 14 helical transmembrane segments spans residues 11–31 (ALPE…DLFV), 44–64 (MLAL…YPVL), 74–94 (PIAS…MIYA), 103–123 (FLKG…CVMV), 128–148 (MLTL…LIAL), 163–183 (FVLG…VYGG), 206–226 (VSLG…AVPF), 238–258 (PTAV…VFVI), 267–287 (PAAV…LVVG), 300–320 (MLAY…LAAT), 328–348 (MFYA…LLAL), 371–391 (YALL…LVGF), 404–424 (VGLT…AFYY), and 452–472 (LVLG…NGLY).

The protein belongs to the complex I subunit 2 family. In terms of assembly, NDH-1 is composed of 14 different subunits. Subunits NuoA, H, J, K, L, M, N constitute the membrane sector of the complex.

Its subcellular location is the cell inner membrane. The enzyme catalyses a quinone + NADH + 5 H(+)(in) = a quinol + NAD(+) + 4 H(+)(out). Its function is as follows. NDH-1 shuttles electrons from NADH, via FMN and iron-sulfur (Fe-S) centers, to quinones in the respiratory chain. The immediate electron acceptor for the enzyme in this species is believed to be ubiquinone. Couples the redox reaction to proton translocation (for every two electrons transferred, four hydrogen ions are translocated across the cytoplasmic membrane), and thus conserves the redox energy in a proton gradient. This Laribacter hongkongensis (strain HLHK9) protein is NADH-quinone oxidoreductase subunit N.